Consider the following 113-residue polypeptide: Integration host factor subunit alpha (113 aa).

Residues 59-80 (GNFQVRDKPPRPGRNPKTGETI) are disordered.

Belongs to the bacterial histone-like protein family. In terms of assembly, heterodimer of an alpha and a beta chain.

This protein is one of the two subunits of integration host factor, a specific DNA-binding protein that functions in genetic recombination as well as in transcriptional and translational control. This Bordetella bronchiseptica (strain ATCC BAA-588 / NCTC 13252 / RB50) (Alcaligenes bronchisepticus) protein is Integration host factor subunit alpha.